Here is a 119-residue protein sequence, read N- to C-terminus: MAGRGKLIAVIGDEDTVTGFLLGGIGELNKNRHPNFLVVEKDTTINEIEDTFRQFLNRDDIGIILINQYIAEMVRHALDAHQQSIPAVLEIPSKEHPYDAAKDSILRRARGMFTAEDLR.

Belongs to the V-ATPase F subunit family. In terms of assembly, V-ATPase is a heteromultimeric enzyme made up of two complexes: the ATP-hydrolytic V1 complex and the proton translocation V0 complex. The V1 complex consists of three catalytic AB heterodimers that form a heterohexamer, three peripheral stalks each consisting of EG heterodimers, one central rotor including subunits D and F, and the regulatory subunits C and H. The proton translocation complex V0 consists of the proton transport subunit a, a ring of proteolipid subunits c9c'', rotary subunit d, subunits e and f, and the accessory subunits ATP6AP1/Ac45 and ATP6AP2/PRR.

The protein localises to the cytoplasmic vesicle. It localises to the secretory vesicle. Its subcellular location is the synaptic vesicle membrane. It is found in the clathrin-coated vesicle membrane. In terms of biological role, subunit of the V1 complex of vacuolar(H+)-ATPase (V-ATPase), a multisubunit enzyme composed of a peripheral complex (V1) that hydrolyzes ATP and a membrane integral complex (V0) that translocates protons. V-ATPase is responsible for acidifying and maintaining the pH of intracellular compartments and in some cell types, is targeted to the plasma membrane, where it is responsible for acidifying the extracellular environment. In Homo sapiens (Human), this protein is V-type proton ATPase subunit F (ATP6V1F).